A 504-amino-acid polypeptide reads, in one-letter code: MELLTGAGLWSVAIFTVIFILLVDLMHRHQRWTSRYPPGPVPWPVLGNLLQVDLDNMPYSLYKLQNRYGDVFSLQMGWKPMVVINGLKAMKEVLLTCGEDTADRPQVPIFEYLGVKPGSQGVVLAPYGPEWREQRRFSVSTLRNFGLGKKSLEDWVTKEARHLCDAFTAQAGQPINPNTMLNNAVCNVIASLIFARRFEYEDPYLIRMQKVLEDSLTEISGLIPEVLNMFPILLRIPGLPGKVFQGQKSLLAIVENLLTENRNTWDPDQPPRNLTDAFLAEIEKVKGNAESSFNDENLRMVVLDLFTAGMVTTSTTLSWALLLMILHPDVQRRVQQEIDAVIGQVRHPEMADQARMPYTNAVIHEVQRFGDIAPLNLPRITSRDIEVQDFLIPKGSILIPNMSSVLKDETVWEKPLRFHPEHFLDAQGHFVKPEAFMPFSAGRRSCLGEPLARMELFLFFTCLLQHFSFSVPNGQPRPRNLGVFPFPVAPYPYQLCAVMREQGH.

The residue at position 249 (S249) is a Phosphoserine. Position 446 (C446) interacts with heme.

Belongs to the cytochrome P450 family. The cofactor is heme.

Its subcellular location is the endoplasmic reticulum membrane. The protein resides in the microsome membrane. It catalyses the reaction an organic molecule + reduced [NADPH--hemoprotein reductase] + O2 = an alcohol + oxidized [NADPH--hemoprotein reductase] + H2O + H(+). Cytochromes P450 are a group of heme-thiolate monooxygenases. In liver microsomes, this enzyme is involved in an NADPH-dependent electron transport pathway. It oxidizes a variety of structurally unrelated compounds, including steroids, fatty acids, and xenobiotics. The protein is Cytochrome P450 2D10 (Cyp2d10) of Mus musculus (Mouse).